The primary structure comprises 450 residues: Chromosomal replication initiator protein DnaA 2 (450 aa).

The domain I, interacts with DnaA modulators stretch occupies residues 1–87 (MLTCNECTTW…LEFVVAEHKK (87 aa)). The domain II stretch occupies residues 87–114 (KPSAPVASQKESNEGISEVFEETKDFEL). The tract at residues 115–330 (KLNLSYRFDN…GAINKLTAYC (216 aa)) is domain III, AAA+ region. Residues glycine 159, glycine 161, lysine 162, and threonine 163 each contribute to the ATP site. The segment at 331-450 (RLFGKSLTET…VNLCKNHIVG (120 aa)) is domain IV, binds dsDNA.

This sequence belongs to the DnaA family. In terms of assembly, oligomerizes as a right-handed, spiral filament on DNA at oriC.

The protein localises to the cytoplasm. Its function is as follows. Plays an essential role in the initiation and regulation of chromosomal replication. ATP-DnaA binds to the origin of replication (oriC) to initiate formation of the DNA replication initiation complex once per cell cycle. Binds the DnaA box (a 9 base pair repeat at the origin) and separates the double-stranded (ds)DNA. Forms a right-handed helical filament on oriC DNA; dsDNA binds to the exterior of the filament while single-stranded (ss)DNA is stabiized in the filament's interior. The ATP-DnaA-oriC complex binds and stabilizes one strand of the AT-rich DNA unwinding element (DUE), permitting loading of DNA polymerase. After initiation quickly degrades to an ADP-DnaA complex that is not apt for DNA replication. Binds acidic phospholipids. In Chlamydia pneumoniae (Chlamydophila pneumoniae), this protein is Chromosomal replication initiator protein DnaA 2.